The primary structure comprises 118 residues: Large ribosomal subunit protein uL23c (118 aa).

The protein belongs to the universal ribosomal protein uL23 family. As to quaternary structure, part of the 50S ribosomal subunit.

The protein resides in the plastid. The protein localises to the chloroplast. Its function is as follows. Binds to 23S rRNA. This chain is Large ribosomal subunit protein uL23c (rpl23), found in Stigeoclonium helveticum (Green alga).